Consider the following 605-residue polypeptide: Tungsten-containing aldehyde ferredoxin oxidoreductase (605 aa).

7 residues coordinate tungstopterin: arginine 76, asparagine 93, glycine 95, arginine 182, alanine 183, glycine 185, and arginine 186. Positions 288, 291, and 295 each coordinate [4Fe-4S] cluster. Residues aspartate 338, leucine 342, aspartate 343, arginine 444, lysine 450, aspartate 489, and leucine 493 each contribute to the tungstopterin site. Cysteine 494 serves as a coordination point for [4Fe-4S] cluster. Leucine 495 lines the tungstopterin pocket.

It belongs to the AOR/FOR family. Monomer. Homodimer. It depends on [4Fe-4S] cluster as a cofactor. Tungstopterin serves as cofactor.

It catalyses the reaction an aldehyde + 2 oxidized [2Fe-2S]-[ferredoxin] + H2O = a carboxylate + 2 reduced [2Fe-2S]-[ferredoxin] + 3 H(+). Its activity is regulated as follows. Inhibited by arsenite, iodoacetate and cyanide. Its function is as follows. Aldehyde ferredoxin oxidoreductase with a broad substrate specificity. Catalyzes the oxidation of a range of aliphatic aldehydes to their corresponding carboxylic acids. In vitro can use crotonaldehyde, acetaldehyde, formaldehyde, butyraldehyde or glyceraldehyde as substrate, using methyl viologen or ferredoxin, but not NAD(P), as the electron acceptor. Does not oxidize glucose or glyceraldehyde 3-phosphate. May be involved in a pyroglycolytic pathway. This Pyrococcus furiosus (strain ATCC 43587 / DSM 3638 / JCM 8422 / Vc1) protein is Tungsten-containing aldehyde ferredoxin oxidoreductase.